The sequence spans 491 residues: Transmembrane protein 39B (491 aa).

Positions 1–56 are disordered; the sequence is MAGGRRGANRTTYCRSPLSNDTGSVGNGNHSTSSPVTGVRSRTRNGSGTGMSSPPL. N-linked (GlcNAc...) asparagine glycans are attached at residues N9, N20, N29, and N45. 2 stretches are compositionally biased toward polar residues: residues 9 to 36 and 44 to 56; these read NRTTYCRSPLSNDTGSVGNGNHSTSSPV and RNGSGTGMSSPPL. A run of 8 helical transmembrane segments spans residues 79–99, 115–135, 152–172, 185–205, 290–310, 322–342, 423–443, and 449–469; these read LFELHLFACHLIALFVHYVNI, TSLNFHLIDYNMLVFTVIVLA, LSFPHSVFLVTARFAVLTLAG, TYSVLSLLFLCYPFGMYIPFF, EVLVSSMLSAYYVAFVPVWFV, CELFILVSVSTSVILMRHLLP, ILNILIILEGAMIFYQLYSLM, and HQTISLALILFSNYYAFFKLL.

Belongs to the TMEM39 family. In terms of tissue distribution, expressed in the ovary, followed by the intestine and brain.

The protein localises to the endoplasmic reticulum membrane. May protect the cells against DNA damage caused by exposure to the cold-warming stress and facilitates tissue damage repair during the recovery phase. The sequence is that of Transmembrane protein 39B from Danio rerio (Zebrafish).